The primary structure comprises 97 residues: Signal recognition particle 19 kDa protein (97 aa).

It belongs to the SRP19 family. As to quaternary structure, part of the signal recognition particle protein translocation system, which is composed of SRP and FtsY. Archaeal SRP consists of a 7S RNA molecule of 300 nucleotides and two protein subunits: SRP54 and SRP19.

The protein resides in the cytoplasm. Involved in targeting and insertion of nascent membrane proteins into the cytoplasmic membrane. Binds directly to 7S RNA and mediates binding of the 54 kDa subunit of the SRP. This is Signal recognition particle 19 kDa protein from Methanocella arvoryzae (strain DSM 22066 / NBRC 105507 / MRE50).